We begin with the raw amino-acid sequence, 101 residues long: Small ribosomal subunit protein uS10 (101 aa).

It belongs to the universal ribosomal protein uS10 family. As to quaternary structure, part of the 30S ribosomal subunit.

Functionally, involved in the binding of tRNA to the ribosomes. In Corynebacterium efficiens (strain DSM 44549 / YS-314 / AJ 12310 / JCM 11189 / NBRC 100395), this protein is Small ribosomal subunit protein uS10.